Here is an 81-residue protein sequence, read N- to C-terminus: Serine/arginine-rich splicing factor 6 (81 aa).

The segment covering 1 to 48 has biased composition (basic residues); the sequence is RSRSRSRRSSRSRSRSISKSRSRSRSRSKGRSRSRSKGRKSRSKSKSK. The tract at residues 1 to 81 is disordered; it reads RSRSRSRRSS…SRSRSRSRSP (81 aa). Basic and acidic residues predominate over residues 62-71; sequence RSKDEYEKSR. The span at 72 to 81 shows a compositional bias: basic residues; sequence SRSRSRSRSP.

The protein belongs to the splicing factor SR family. Binds SREK1/SFRS12. Interacts with DYRK1A. In terms of processing, extensively phosphorylated on serine residues in the RS domain. Phosphorylated by DYRK1A, probably in the RS domain. Phosphorylation by DYRK1A modulates alternative splice site selection and inhibits the expression of MAPT/Tau exon 10.

Its subcellular location is the nucleus. The protein localises to the nucleus speckle. Plays a role in constitutive splicing and modulates the selection of alternative splice sites. Plays a role in the alternative splicing of MAPT/Tau exon 10. Binds to alternative exons of TNC pre-mRNA and promotes the expression of alternatively spliced TNC. Plays a role in wound healing and in the regulation of keratinocyte differentiation and proliferation via its role in alternative splicing. In Oryctolagus cuniculus (Rabbit), this protein is Serine/arginine-rich splicing factor 6 (SRSF6).